A 274-amino-acid chain; its full sequence is Putative pyruvate, phosphate dikinase regulatory protein 1 (274 aa).

Residue 149–156 (GISRTSKT) participates in ADP binding.

The protein belongs to the pyruvate, phosphate/water dikinase regulatory protein family. PDRP subfamily.

The catalysed reaction is N(tele)-phospho-L-histidyl/L-threonyl-[pyruvate, phosphate dikinase] + ADP = N(tele)-phospho-L-histidyl/O-phospho-L-threonyl-[pyruvate, phosphate dikinase] + AMP + H(+). The enzyme catalyses N(tele)-phospho-L-histidyl/O-phospho-L-threonyl-[pyruvate, phosphate dikinase] + phosphate + H(+) = N(tele)-phospho-L-histidyl/L-threonyl-[pyruvate, phosphate dikinase] + diphosphate. Functionally, bifunctional serine/threonine kinase and phosphorylase involved in the regulation of the pyruvate, phosphate dikinase (PPDK) by catalyzing its phosphorylation/dephosphorylation. The protein is Putative pyruvate, phosphate dikinase regulatory protein 1 of Listeria monocytogenes serotype 4b (strain F2365).